The chain runs to 201 residues: 3-isopropylmalate dehydratase small subunit (201 aa).

The protein belongs to the LeuD family. LeuD type 1 subfamily. As to quaternary structure, heterodimer of LeuC and LeuD.

It carries out the reaction (2R,3S)-3-isopropylmalate = (2S)-2-isopropylmalate. Its pathway is amino-acid biosynthesis; L-leucine biosynthesis; L-leucine from 3-methyl-2-oxobutanoate: step 2/4. Functionally, catalyzes the isomerization between 2-isopropylmalate and 3-isopropylmalate, via the formation of 2-isopropylmaleate. In Azorhizobium caulinodans (strain ATCC 43989 / DSM 5975 / JCM 20966 / LMG 6465 / NBRC 14845 / NCIMB 13405 / ORS 571), this protein is 3-isopropylmalate dehydratase small subunit.